Reading from the N-terminus, the 191-residue chain is Ribonuclease HII (191 aa).

An RNase H type-2 domain is found at 16 to 191 (INLIGIDEAG…KLHRKSFKLL (176 aa)). Residues D22, E23, and D110 each coordinate a divalent metal cation.

This sequence belongs to the RNase HII family. Mn(2+) is required as a cofactor. It depends on Mg(2+) as a cofactor.

The protein resides in the cytoplasm. The enzyme catalyses Endonucleolytic cleavage to 5'-phosphomonoester.. Endonuclease that specifically degrades the RNA of RNA-DNA hybrids. The chain is Ribonuclease HII from Campylobacter jejuni subsp. doylei (strain ATCC BAA-1458 / RM4099 / 269.97).